Here is a 452-residue protein sequence, read N- to C-terminus: Interferon-induced protein 44-like (452 aa).

The 159-residue stretch at 1–159 folds into the TLDc domain; the sequence is MEVTTRLTWN…YLECEVFRVE (159 aa).

This sequence belongs to the IFI44 family. As to quaternary structure, interacts with FKBP5; this interaction modulates IKBKB and IKBKE kinase activities.

Its subcellular location is the cytoplasm. Type I interferon-stimulated gene (ISG) that plays a critical role in antiviral and antibacterial activity. During bacterial infection, promotes macrophage differentiation and facilitates inflammatory cytokine secretion. Plays a role in the control of respiratory syncytial virus/RSV infection, reducing the ability of the virus to replicate. Exhibits a low antiviral activity against hepatitis C virus. Also acts as a feedback regulator of IFN responses by negatively regulating IKBKB and IKBKE kinase activities through interaction with FKBP5. The chain is Interferon-induced protein 44-like (IFI44L) from Homo sapiens (Human).